A 429-amino-acid polypeptide reads, in one-letter code: CinA-like protein (429 aa).

Belongs to the CinA family.

This Chlorobium limicola (strain DSM 245 / NBRC 103803 / 6330) protein is CinA-like protein.